The chain runs to 163 residues: ATP synthase subunit b 1 (163 aa).

A helical transmembrane segment spans residues 6–26 (LAELWVAVAFLLFVGILIYVG).

It belongs to the ATPase B chain family. As to quaternary structure, F-type ATPases have 2 components, F(1) - the catalytic core - and F(0) - the membrane proton channel. F(1) has five subunits: alpha(3), beta(3), gamma(1), delta(1), epsilon(1). F(0) has three main subunits: a(1), b(2) and c(10-14). The alpha and beta chains form an alternating ring which encloses part of the gamma chain. F(1) is attached to F(0) by a central stalk formed by the gamma and epsilon chains, while a peripheral stalk is formed by the delta and b chains.

The protein localises to the cell inner membrane. Functionally, f(1)F(0) ATP synthase produces ATP from ADP in the presence of a proton or sodium gradient. F-type ATPases consist of two structural domains, F(1) containing the extramembraneous catalytic core and F(0) containing the membrane proton channel, linked together by a central stalk and a peripheral stalk. During catalysis, ATP synthesis in the catalytic domain of F(1) is coupled via a rotary mechanism of the central stalk subunits to proton translocation. Component of the F(0) channel, it forms part of the peripheral stalk, linking F(1) to F(0). This is ATP synthase subunit b 1 from Xanthobacter autotrophicus (strain ATCC BAA-1158 / Py2).